Reading from the N-terminus, the 321-residue chain is Ubiquinone biosynthesis O-methyltransferase, mitochondrial (321 aa).

S-adenosyl-L-methionine contacts are provided by Arg-102, Gly-135, Asp-157, and Leu-210. Positions 211, 214, and 215 each coordinate Mg(2+).

It belongs to the class I-like SAM-binding methyltransferase superfamily. UbiG/COQ3 family. In terms of assembly, component of a multi-subunit COQ enzyme complex. The cofactor is Mg(2+).

It is found in the mitochondrion inner membrane. It carries out the reaction a 3,4-dihydroxy-5-(all-trans-polyprenyl)benzoate + S-adenosyl-L-methionine = a 4-hydroxy-3-methoxy-5-(all-trans-polyprenyl)benzoate + S-adenosyl-L-homocysteine + H(+). It catalyses the reaction a 3-demethylubiquinone + S-adenosyl-L-methionine = a ubiquinone + S-adenosyl-L-homocysteine. The enzyme catalyses a 3-demethylubiquinol + S-adenosyl-L-methionine = a ubiquinol + S-adenosyl-L-homocysteine + H(+). It participates in cofactor biosynthesis; ubiquinone biosynthesis. Its function is as follows. O-methyltransferase required for two non-consecutive steps during ubiquinone biosynthesis. Catalyzes the 2 O-methylation of 3,4-dihydroxy-5-(all-trans-polyprenyl)benzoic acid into 4-hydroxy-3-methoxy-5-(all-trans-polyprenyl)benzoic acid. Also catalyzes the last step of ubiquinone biosynthesis by mediating methylation of 3-demethylubiquinone into ubiquinone. Also able to mediate the methylation of 3-demethylubiquinol into ubiquinol. This is Ubiquinone biosynthesis O-methyltransferase, mitochondrial from Dictyostelium discoideum (Social amoeba).